A 529-amino-acid polypeptide reads, in one-letter code: Probable bifunctional tRNA threonylcarbamoyladenosine biosynthesis protein (529 aa).

Positions 1 to 324 (MIVLGLEGTA…FRIDEVDAPW (324 aa)) are kae1. Fe cation-binding residues include histidine 107, histidine 111, and tyrosine 128. L-threonylcarbamoyladenylate contacts are provided by residues 128–132 (YVSGG), aspartate 160, glycine 173, glutamate 177, and asparagine 257. Aspartate 285 is a Fe cation binding site. In terms of domain architecture, Protein kinase spans 329–529 (SRKDYGKAGA…SAIRRRHRYV (201 aa)). Residues 335–342 (KAGAESRI) and lysine 355 each bind ATP. Aspartate 447 functions as the Proton acceptor; for kinase activity in the catalytic mechanism.

It in the N-terminal section; belongs to the KAE1 / TsaD family. The protein in the C-terminal section; belongs to the protein kinase superfamily. Tyr protein kinase family. BUD32 subfamily. As to quaternary structure, component of the KEOPS complex that consists of Kae1, Bud32, Cgi121 and Pcc1; the whole complex dimerizes. Fe(2+) serves as cofactor.

The protein resides in the cytoplasm. It catalyses the reaction L-seryl-[protein] + ATP = O-phospho-L-seryl-[protein] + ADP + H(+). The enzyme catalyses L-threonyl-[protein] + ATP = O-phospho-L-threonyl-[protein] + ADP + H(+). The catalysed reaction is L-threonylcarbamoyladenylate + adenosine(37) in tRNA = N(6)-L-threonylcarbamoyladenosine(37) in tRNA + AMP + H(+). Its function is as follows. Required for the formation of a threonylcarbamoyl group on adenosine at position 37 (t(6)A37) in tRNAs that read codons beginning with adenine. Is a component of the KEOPS complex that is probably involved in the transfer of the threonylcarbamoyl moiety of threonylcarbamoyl-AMP (TC-AMP) to the N6 group of A37. The Kae1 domain likely plays a direct catalytic role in this reaction. The Bud32 domain probably displays kinase activity that regulates Kae1 function. This chain is Probable bifunctional tRNA threonylcarbamoyladenosine biosynthesis protein, found in Thermoplasma acidophilum (strain ATCC 25905 / DSM 1728 / JCM 9062 / NBRC 15155 / AMRC-C165).